Consider the following 361-residue polypeptide: MERITVNLGERSYPISIGAGLFANPALLSLSAKQKVVIVTNHTVAPLYAPAIISLLDHIGCQHALLELPDGEQYKTLETFNTVMSFLLEHNYSRDVVVIALGGGVIGDLVGFAAACYQRGVDFIQIPTTLLSQVDSSVGGKTAVNHPLGKNMIGAFYQPKAVVIDTDCLTTLPAREFAAGMAEVIKYGIIYDSAFFDWLEAQMEALYALDEQALTYAIARCCQIKAEVVAQDEKESGIRALLNLGHTFGHAIEAHMGYGNWLHGEAVSAGTVMAAKTAQLQGLIDASQFERILAILKKAHLPVRTPENMTFADFMQHMMRDKKVLAGELRLVLPTSIGTSAVVKGVPEAVIAQAIEYCRTV.

Residues asparagine 41, 70 to 75 (DGEQYK), 104 to 108 (GVIGD), 128 to 129 (TT), lysine 141, lysine 150, 150 to 151 (KN), and 168 to 171 (CLTT) contribute to the NAD(+) site. Residues glutamate 183, histidine 246, and histidine 263 each coordinate Zn(2+).

Belongs to the sugar phosphate cyclases superfamily. Dehydroquinate synthase family. NAD(+) serves as cofactor. It depends on Co(2+) as a cofactor. The cofactor is Zn(2+).

The protein resides in the cytoplasm. The enzyme catalyses 7-phospho-2-dehydro-3-deoxy-D-arabino-heptonate = 3-dehydroquinate + phosphate. The protein operates within metabolic intermediate biosynthesis; chorismate biosynthesis; chorismate from D-erythrose 4-phosphate and phosphoenolpyruvate: step 2/7. Its function is as follows. Catalyzes the conversion of 3-deoxy-D-arabino-heptulosonate 7-phosphate (DAHP) to dehydroquinate (DHQ). The protein is 3-dehydroquinate synthase of Vibrio cholerae serotype O1 (strain ATCC 39315 / El Tor Inaba N16961).